The following is a 282-amino-acid chain: Ribosomal RNA small subunit methyltransferase I (282 aa).

The protein belongs to the methyltransferase superfamily. RsmI family.

It localises to the cytoplasm. The enzyme catalyses cytidine(1402) in 16S rRNA + S-adenosyl-L-methionine = 2'-O-methylcytidine(1402) in 16S rRNA + S-adenosyl-L-homocysteine + H(+). In terms of biological role, catalyzes the 2'-O-methylation of the ribose of cytidine 1402 (C1402) in 16S rRNA. The polypeptide is Ribosomal RNA small subunit methyltransferase I (Buchnera aphidicola subsp. Acyrthosiphon pisum (strain APS) (Acyrthosiphon pisum symbiotic bacterium)).